We begin with the raw amino-acid sequence, 241 residues long: Ubiquinone biosynthesis O-methyltransferase (241 aa).

Residues Arg44, Gly63, Asp84, and Met128 each contribute to the S-adenosyl-L-methionine site.

The protein belongs to the methyltransferase superfamily. UbiG/COQ3 family.

The catalysed reaction is a 3-demethylubiquinol + S-adenosyl-L-methionine = a ubiquinol + S-adenosyl-L-homocysteine + H(+). It catalyses the reaction a 3-(all-trans-polyprenyl)benzene-1,2-diol + S-adenosyl-L-methionine = a 2-methoxy-6-(all-trans-polyprenyl)phenol + S-adenosyl-L-homocysteine + H(+). Its pathway is cofactor biosynthesis; ubiquinone biosynthesis. Functionally, O-methyltransferase that catalyzes the 2 O-methylation steps in the ubiquinone biosynthetic pathway. This Hydrogenovibrio crunogenus (strain DSM 25203 / XCL-2) (Thiomicrospira crunogena) protein is Ubiquinone biosynthesis O-methyltransferase.